The sequence spans 95 residues: Small ribosomal subunit protein bS6 (95 aa).

The protein belongs to the bacterial ribosomal protein bS6 family.

Binds together with bS18 to 16S ribosomal RNA. The chain is Small ribosomal subunit protein bS6 from Desulfitobacterium hafniense (strain DSM 10664 / DCB-2).